A 98-amino-acid chain; its full sequence is Pancreatic polypeptide prohormone (98 aa).

An N-terminal signal peptide occupies residues M1–G29. Y65 carries the tyrosine amide modification.

The protein belongs to the NPY family. No icosapeptide-like peptide is cleaved from the C-terminal.

Its subcellular location is the secreted. Functionally, hormone secreted by pancreatic cells that acts as a regulator of pancreatic and gastrointestinal functions probably by signaling through the G protein-coupled receptor NPY4R2. The protein is Pancreatic polypeptide prohormone (Ppy) of Rattus norvegicus (Rat).